The chain runs to 84 residues: CDC42 small effector protein 2-A (84 aa).

S-palmitoyl cysteine attachment occurs at residues Cys-10 and Cys-11. The 14-residue stretch at 29 to 42 (IGEPTNFVHTAHVG) folds into the CRIB domain.

It belongs to the CDC42SE/SPEC family.

Its subcellular location is the cytoplasm. The protein localises to the cytoskeleton. The protein resides in the cell membrane. Its function is as follows. Probably involved in the organization of the actin cytoskeleton by acting downstream of CDC42, inducing actin filament assembly. The chain is CDC42 small effector protein 2-A (cdc42se2-a) from Xenopus laevis (African clawed frog).